Consider the following 1009-residue polypeptide: Glutamate receptor ionotropic, delta-1 (1009 aa).

The signal sequence occupies residues 1 to 20 (MEALTLWLLPWICQCVTVRA). The segment at 21-436 (DSIIHIGAIF…ERPMGSRLQG (416 aa)) is interaction with CBLN1. Over 21–562 (DSIIHIGAIF…SIFSLFAPFD (542 aa)) the chain is Extracellular. Intrachain disulfides connect Cys80-Cys351, Cys96-Cys128, and Cys294-Cys306. N-linked (GlcNAc...) asparagine glycosylation is found at Asn131 and Asn200. N-linked (GlcNAc...) asparagine glycosylation is found at Asn422 and Asn498. The Ca(2+) site is built by Glu527, Val530, and Asp531. A helical transmembrane segment spans residues 563–583 (FAVWACIAAAIPVVGVLIFVL). At 584 to 637 (NRIQAVRSQSATQPRPSASATLHSAIWIVYGAFVQQGGESSVNSVAMRIVMGSW) the chain is on the cytoplasmic side. Residues 638–658 (WLFTLIVCSSYTANLAAFLTV) form a helical membrane-spanning segment. At 659–830 (SRMDNPIRTF…TEGKSLKLHS (172 aa)) the chain is on the extracellular side. Asp753, Asp755, and Ser757 together coordinate Ca(2+). A helical membrane pass occupies residues 831-851 (FAGVFCILAIGLLLACLVAAL). Over 852-1009 (ELWWNSNRCH…ALDTSHGTSI (158 aa)) the chain is Cytoplasmic. Positions 931–942 (LPEQSSHGTSRT) are enriched in polar residues. Positions 931–960 (LPEQSSHGTSRTLSSGPSSNLPLPLSSSAT) are disordered. The segment covering 943–958 (LSSGPSSNLPLPLSSS) has biased composition (low complexity).

This sequence belongs to the glutamate-gated ion channel (TC 1.A.10.1) family. GRID1 subfamily. In terms of assembly, homodimer. Interacts (via extracellular N-terminal domain) with CBLN1 (via C1q domain), and more weakly with CBLN2; the interactions mediate the trans-synaptic adhesion complexes also with neurexins and are required for ligand-gated cation channel activity. In terms of tissue distribution, equally in forebrain and cerebellum.

It localises to the postsynaptic cell membrane. The catalysed reaction is Ca(2+)(in) = Ca(2+)(out). It carries out the reaction Na(+)(in) = Na(+)(out). Member of the ionotropic glutamate receptor family, which plays a crucial role in synaptic organization and signal transduction in the central nervous system. Although it shares structural features with ionotropic glutamate receptors, does not bind glutamate as a primary ligand. Instead, forms trans-synaptic adhesion complexes with presynaptic neurexins and cerebellins, regulating NMDA and AMPA receptor activity and influencing synaptic plasticity through signal transduction. In the presence of NRX1B-CBLN1, forms cation-selective channels that are proposed to be gated by glycine and D-serine. However, recent research disputes this ligand-gated cation channel activity. Cation-selective ion channel can be triggered by GRM1 in dopaminergic neurons. Also acts as a receptor for GABA, modulating inhibitory synaptic plasticity through non-ionotropic mechanisms. This is Glutamate receptor ionotropic, delta-1 (Grid1) from Mus musculus (Mouse).